The chain runs to 442 residues: Probable serine/threonine-protein kinase kinase DDB_G0280643 (442 aa).

In terms of domain architecture, Protein kinase spans Ile-74–Phe-398. ATP is bound by residues Val-80–Met-88 and Lys-103. Asp-231 functions as the Proton acceptor in the catalytic mechanism.

It belongs to the protein kinase superfamily. CMGC Ser/Thr protein kinase family. MAP kinase subfamily.

The enzyme catalyses L-seryl-[protein] + ATP = O-phospho-L-seryl-[protein] + ADP + H(+). It catalyses the reaction L-threonyl-[protein] + ATP = O-phospho-L-threonyl-[protein] + ADP + H(+). The sequence is that of Probable serine/threonine-protein kinase kinase DDB_G0280643 from Dictyostelium discoideum (Social amoeba).